The following is a 547-amino-acid chain: MAAKEIKFGRTAREKMLHGVDILADAVKVTLGPKGRNVIIDKSFGAPRITKDGVSVAKEIELEDKFENMGAQMVREVASKTNDIAGDGTTTATVLAQAIVREGNKAVAAGMNPMDLKRGIDLAVAEVVKDLQAKAKKISTSEEVAQVGTISANGDTQVGKDIAEAMQKVGNEGVITVEEAKTAETELEVVEGMQFDRGYLSPYFVTNPEKMVADLEDAYVLLHEKKLSNLQAMLPVLEAVVQTGKPLVIIAEDVEGEALATLVVNKLRGGLKIAAVKAPGFGDRRKAMLEDIAILTGGTVISEDLGIKLETVTLDMLGRAKKISITKENTTIVDGAGQKSDIEGRVAQIKAQIEETSSDYDREKLQERLAKLAGGVAVIRVGGSTEIEVKERKDRIDDALNATRAAVQEGIVPGGGTALLRSSTKITVKGVNDDQEAGINIVRRALQSLVRQIATNAGDEASIIVGKILDKDNDNYGYNAQTGEFGDMIAMGIVDPVKVVRTALQNAASVASLLITTEAMIAELPKKDSAGGGMPDMGGMGGMGGMM.

Residues 30–33 (TLGP), lysine 51, 87–91 (DGTTT), glycine 415, and aspartate 495 contribute to the ATP site.

The protein belongs to the chaperonin (HSP60) family. In terms of assembly, forms a cylinder of 14 subunits composed of two heptameric rings stacked back-to-back. Interacts with the co-chaperonin GroES.

The protein resides in the cytoplasm. The enzyme catalyses ATP + H2O + a folded polypeptide = ADP + phosphate + an unfolded polypeptide.. Its function is as follows. Together with its co-chaperonin GroES, plays an essential role in assisting protein folding. The GroEL-GroES system forms a nano-cage that allows encapsulation of the non-native substrate proteins and provides a physical environment optimized to promote and accelerate protein folding. In Allorhizobium ampelinum (strain ATCC BAA-846 / DSM 112012 / S4) (Agrobacterium vitis (strain S4)), this protein is Chaperonin GroEL.